The primary structure comprises 491 residues: Glutamate--tRNA ligase (491 aa).

A 'HIGH' region motif is present at residues Pro9–Met19. The short motif at Lys253–Arg257 is the 'KMSKS' region element. Lys256 lines the ATP pocket.

It belongs to the class-I aminoacyl-tRNA synthetase family. Glutamate--tRNA ligase type 1 subfamily. Monomer.

The protein localises to the cytoplasm. The catalysed reaction is tRNA(Glu) + L-glutamate + ATP = L-glutamyl-tRNA(Glu) + AMP + diphosphate. Its function is as follows. Catalyzes the attachment of glutamate to tRNA(Glu) in a two-step reaction: glutamate is first activated by ATP to form Glu-AMP and then transferred to the acceptor end of tRNA(Glu). This chain is Glutamate--tRNA ligase, found in Leifsonia xyli subsp. xyli (strain CTCB07).